A 352-amino-acid polypeptide reads, in one-letter code: Farnesyl pyrophosphate synthase (352 aa).

Isopentenyl diphosphate-binding residues include Lys-52, Arg-55, and Gln-93. Positions 100 and 104 each coordinate Mg(2+). Arg-109 is a dimethylallyl diphosphate binding site. Residue Arg-110 participates in isopentenyl diphosphate binding. Residues Lys-197, Thr-198, Gln-237, Lys-254, and Lys-263 each contribute to the dimethylallyl diphosphate site.

This sequence belongs to the FPP/GGPP synthase family. Mg(2+) serves as cofactor.

The enzyme catalyses isopentenyl diphosphate + dimethylallyl diphosphate = (2E)-geranyl diphosphate + diphosphate. The catalysed reaction is isopentenyl diphosphate + (2E)-geranyl diphosphate = (2E,6E)-farnesyl diphosphate + diphosphate. The protein operates within isoprenoid biosynthesis; farnesyl diphosphate biosynthesis; farnesyl diphosphate from geranyl diphosphate and isopentenyl diphosphate: step 1/1. Its pathway is isoprenoid biosynthesis; geranyl diphosphate biosynthesis; geranyl diphosphate from dimethylallyl diphosphate and isopentenyl diphosphate: step 1/1. Farnesyl pyrophosphate synthase; part of the second module of ergosterol biosynthesis pathway that includes the middle steps of the pathway. ERG20 catalyzes the sequential condensation of isopentenyl pyrophosphate with dimethylallyl pyrophosphate, and then with the resultant geranylpyrophosphate to the ultimate product farnesyl pyrophosphate. The second module is carried out in the vacuole and involves the formation of farnesyl diphosphate, which is also an important intermediate in the biosynthesis of ubiquinone, dolichol, heme and prenylated proteins. Activity by the mevalonate kinase ERG12 first converts mevalonate into 5-phosphomevalonate. 5-phosphomevalonate is then further converted to 5-diphosphomevalonate by the phosphomevalonate kinase ERG8. The diphosphomevalonate decarboxylase MVD1/ERG19 then produces isopentenyl diphosphate. The isopentenyl-diphosphate delta-isomerase IDI1 then catalyzes the 1,3-allylic rearrangement of the homoallylic substrate isopentenyl (IPP) to its highly electrophilic allylic isomer, dimethylallyl diphosphate (DMAPP). Finally the farnesyl diphosphate synthase ERG20 catalyzes the sequential condensation of isopentenyl pyrophosphate with dimethylallyl pyrophosphate, and then with the resultant geranylpyrophosphate to the ultimate product farnesyl pyrophosphate. This chain is Farnesyl pyrophosphate synthase (ERG20), found in Saccharomyces cerevisiae (strain ATCC 204508 / S288c) (Baker's yeast).